The chain runs to 155 residues: Ribosome maturation factor RimP (155 aa).

The protein belongs to the RimP family.

The protein resides in the cytoplasm. Required for maturation of 30S ribosomal subunits. This Bacteroides fragilis (strain ATCC 25285 / DSM 2151 / CCUG 4856 / JCM 11019 / LMG 10263 / NCTC 9343 / Onslow / VPI 2553 / EN-2) protein is Ribosome maturation factor RimP.